Reading from the N-terminus, the 217-residue chain is Methylthioribulose-1-phosphate dehydratase (217 aa).

Zn(2+)-binding residues include histidine 106 and histidine 108.

Belongs to the aldolase class II family. MtnB subfamily. Zn(2+) serves as cofactor.

The catalysed reaction is 5-(methylsulfanyl)-D-ribulose 1-phosphate = 5-methylsulfanyl-2,3-dioxopentyl phosphate + H2O. It functions in the pathway amino-acid biosynthesis; L-methionine biosynthesis via salvage pathway; L-methionine from S-methyl-5-thio-alpha-D-ribose 1-phosphate: step 2/6. Catalyzes the dehydration of methylthioribulose-1-phosphate (MTRu-1-P) into 2,3-diketo-5-methylthiopentyl-1-phosphate (DK-MTP-1-P). This is Methylthioribulose-1-phosphate dehydratase from Xanthomonas campestris pv. campestris (strain 8004).